The chain runs to 778 residues: Dynein axonemal intermediate chain 4 (778 aa).

WD repeat units lie at residues 477–517, 526–573, 586–629, 633–673, 676–715, and 721–760; these read HCES…QTPI, LHTS…ECVD, RHIS…QYLE, AHKR…PVMG, SGQR…LDPT, and SPGV…AGGG.

In terms of assembly, part of the multisubunit axonemal dynein complex formed at least of two heavy chains and a number of intermediate and light chains.

The protein resides in the cytoplasm. It is found in the cytoskeleton. It localises to the flagellum axoneme. The protein localises to the cilium axoneme. Its subcellular location is the dynein axonemal particle. In terms of biological role, plays a critical role in the assembly of axonemal dynein complex. Plays a key role in ciliary motility. The sequence is that of Dynein axonemal intermediate chain 4 from Danio rerio (Zebrafish).